A 34-amino-acid polypeptide reads, in one-letter code: Photosystem II reaction center protein Psb30 (34 aa).

A helical membrane pass occupies residues 6 to 26; that stretch reads VIAQLVSLGVIVLVGPAVIIL.

It belongs to the Psb30/Ycf12 family. PSII is composed of 1 copy each of membrane proteins PsbA, PsbB, PsbC, PsbD, PsbE, PsbF, PsbH, PsbI, PsbJ, PsbK, PsbL, PsbM, PsbT, PsbX, PsbY, PsbZ, Psb30/Ycf12, peripheral proteins of the oxygen-evolving complex and a large number of cofactors. It forms dimeric complexes.

It is found in the plastid. It localises to the chloroplast thylakoid membrane. In terms of biological role, a core subunit of photosystem II (PSII), probably helps stabilize the reaction center. This is Photosystem II reaction center protein Psb30 from Pyropia yezoensis (Susabi-nori).